Consider the following 363-residue polypeptide: Cinnamyl alcohol dehydrogenase 2 (363 aa).

Cys-47 contacts Zn(2+). An NADP(+)-binding site is contributed by Thr-49. Zn(2+) contacts are provided by His-69, Glu-70, Cys-100, Cys-103, Cys-106, Cys-114, and Cys-163. Residues Thr-167, Gly-188–Gly-193, Ser-211–Lys-216, Thr-251, Gly-275, and Ser-298–Ile-300 each bind NADP(+).

The protein belongs to the zinc-containing alcohol dehydrogenase family. Homodimer. It depends on Zn(2+) as a cofactor. In terms of tissue distribution, expressed in roots behind the root tips in the pericycle region and layer of cortical cells adjacent to the exodermis. Expressed in vascular bundles and lateral veins of leaf sheaths and blades. Expressed in the vicinity of vascular bundles in the first internode below the inflorescence. Highly expressed in the culm.

It carries out the reaction (E)-cinnamyl alcohol + NADP(+) = (E)-cinnamaldehyde + NADPH + H(+). The enzyme catalyses (E)-coniferol + NADP(+) = (E)-coniferaldehyde + NADPH + H(+). The catalysed reaction is (E)-sinapyl alcohol + NADP(+) = (E)-sinapaldehyde + NADPH + H(+). It catalyses the reaction (E)-4-coumaroyl alcohol + NADP(+) = (E)-4-coumaraldehyde + NADPH + H(+). It carries out the reaction (E)-caffeyl alcohol + NADP(+) = (E)-caffeyl aldehyde + NADPH + H(+). It participates in aromatic compound metabolism; phenylpropanoid biosynthesis. In terms of biological role, involved in lignin biosynthesis. Catalyzes the final step specific for the production of lignin monomers. Catalyzes the NADPH-dependent reduction of coniferaldehyde and sinapaldehyde to their respective alcohols. Plays the major role in monolignol biosynthesis. Functions cooperatively with COMT in the culm internodes for the biosynthesis of monolignols, the lignin precursors. May be involved in lignin biosynthesis in leaves and roots. This Oryza sativa subsp. japonica (Rice) protein is Cinnamyl alcohol dehydrogenase 2.